A 253-amino-acid polypeptide reads, in one-letter code: 3-deoxy-manno-octulosonate cytidylyltransferase (253 aa).

This sequence belongs to the KdsB family.

It localises to the cytoplasm. It carries out the reaction 3-deoxy-alpha-D-manno-oct-2-ulosonate + CTP = CMP-3-deoxy-beta-D-manno-octulosonate + diphosphate. It functions in the pathway nucleotide-sugar biosynthesis; CMP-3-deoxy-D-manno-octulosonate biosynthesis; CMP-3-deoxy-D-manno-octulosonate from 3-deoxy-D-manno-octulosonate and CTP: step 1/1. The protein operates within bacterial outer membrane biogenesis; lipopolysaccharide biosynthesis. Functionally, activates KDO (a required 8-carbon sugar) for incorporation into bacterial lipopolysaccharide in Gram-negative bacteria. In Pseudoalteromonas translucida (strain TAC 125), this protein is 3-deoxy-manno-octulosonate cytidylyltransferase.